The primary structure comprises 510 residues: Beta-glucosidase 12 (510 aa).

Positions 1–24 are cleaved as a signal peptide; sequence MAAAGAMPGGLLLTFLLLAVVASG. Gln-53 is a binding site for a beta-D-glucoside. Asn-122 carries an N-linked (GlcNAc...) asparagine glycan. A beta-D-glucoside-binding positions include His-157 and 202–203; that span reads NE. The active-site Proton donor is Glu-203. 2 cysteine pairs are disulfide-bonded: Cys-208–Cys-243 and Cys-222–Cys-230. Asn-229 carries an N-linked (GlcNAc...) asparagine glycan. Residue Tyr-346 coordinates a beta-D-glucoside. Residues Asn-361 and Asn-371 are each glycosylated (N-linked (GlcNAc...) asparagine). Glu-417 lines the a beta-D-glucoside pocket. Glu-417 functions as the Nucleophile in the catalytic mechanism. The N-linked (GlcNAc...) asparagine glycan is linked to Asn-425. A beta-D-glucoside-binding positions include Trp-466, 473 to 474, and Phe-482; that span reads EW.

It belongs to the glycosyl hydrolase 1 family.

Its subcellular location is the secreted. It catalyses the reaction Hydrolysis of terminal, non-reducing beta-D-glucosyl residues with release of beta-D-glucose.. In terms of biological role, hydrolyzes p-nitrophenyl beta-D-glucoside, p-nitrophenyl beta-D-galactoside, p-nitrophenyl beta-D-xyloside, p-nitrophenyl beta-D-fucoside, p-nitrophenyl beta-L-arabinoside, cello-oligosaccharides and laminaribiose. The polypeptide is Beta-glucosidase 12 (Oryza sativa subsp. japonica (Rice)).